Here is a 373-residue protein sequence, read N- to C-terminus: Sodium-dependent organic anion transporter (373 aa).

Over residues 1–15 the composition is skewed to polar residues; the sequence is MSTDCAGNSTCPVNS. The tract at residues 1 to 21 is disordered; the sequence is MSTDCAGNSTCPVNSTEEDPP. At 1 to 32 the chain is on the extracellular side; that stretch reads MSTDCAGNSTCPVNSTEEDPPVGMEGHANLKL. Residues Asn8 and Asn14 are each glycosylated (N-linked (GlcNAc...) asparagine). The helical transmembrane segment at 33–53 threads the bilayer; it reads LFTVLSAVMVGLVMFSFGCSV. Topologically, residues 54–67 are cytoplasmic; that stretch reads ESQKLWLHLRRPWG. Residues 68–88 traverse the membrane as a helical segment; it reads IAVGLLSQFGLMPLTAYLLAI. Residues 89-97 are Extracellular-facing; the sequence is GFGLKPFQA. A helical membrane pass occupies residues 98 to 118; that stretch reads IAVLMMGSCPGGTISNVLTFW. The Cytoplasmic portion of the chain corresponds to 119-126; it reads VDGDMDLS. A helical membrane pass occupies residues 127–147; sequence ISMTTCSTVAALGMMPLCLYI. Residues 148–157 lie on the Extracellular side of the membrane; that stretch reads YTRSWTLTQN. Residues 158 to 178 traverse the membrane as a helical segment; sequence LVIPYQSIGITLVSLVVPVAS. At 179–195 the chain is on the cytoplasmic side; that stretch reads GVYVNYRWPKQATVILK. The chain crosses the membrane as a helical span at residues 196-216; that stretch reads VGAILGGMLLLVVAVTGMVLA. Topologically, residues 217–224 are extracellular; the sequence is KGWNTDVT. The helical transmembrane segment at 225–245 threads the bilayer; the sequence is LLVISCIFPLVGHVTGFLLAF. Topologically, residues 246–265 are cytoplasmic; it reads LTHQSWQRCRTISIETGAQN. A helical transmembrane segment spans residues 266 to 283; it reads IQLCIAMLQLSFSAEYLV. Gln284 is a topological domain (extracellular). Residues 285–305 traverse the membrane as a helical segment; that stretch reads LLNFALAYGLFQVLHGLLIVA. The Cytoplasmic segment spans residues 306–373; the sequence is AYQAYKRRQK…ELTSHIPSCE (68 aa).

This sequence belongs to the bile acid:sodium symporter (BASS) (TC 2.A.28) family. In terms of processing, glycosylated. Highest expression in lung and testis, moderate expression in heart, bladder and skin, and low expression in blood, liver, stomach, small intestine, spleen, kidney, adrenal gland, seminal vesicle, preputial gland, coagulating gland, lacrimal gland/eye, and brain.

The protein localises to the membrane. It carries out the reaction estrone 3-sulfate(out) + 2 Na(+)(out) = estrone 3-sulfate(in) + 2 Na(+)(in). It catalyses the reaction 17beta-estradiol 3-sulfate(out) + 2 Na(+)(out) = 17beta-estradiol 3-sulfate(in) + 2 Na(+)(in). The enzyme catalyses dehydroepiandrosterone 3-sulfate(out) + 2 Na(+)(out) = dehydroepiandrosterone 3-sulfate(in) + 2 Na(+)(in). The catalysed reaction is androst-5-ene-diol 3-sulfate(out) + 2 Na(+)(out) = androst-5-ene-diol 3-sulfate(in) + 2 Na(+)(in). It carries out the reaction pregnenolone sulfate(out) + 2 Na(+)(out) = pregnenolone sulfate(in) + 2 Na(+)(in). It catalyses the reaction taurolithocholate 3-sulfate(out) + 2 Na(+)(out) = taurolithocholate 3-sulfate(in) + 2 Na(+)(in). The enzyme catalyses androsterone 3alpha-sulfate(out) + 2 Na(+)(out) = androsterone 3alpha-sulfate(in) + 2 Na(+)(in). The catalysed reaction is 5alpha-dihydrotestosterone sulfate(out) + 2 Na(+)(out) = 5alpha-dihydrotestosterone sulfate(in) + 2 Na(+)(in). It carries out the reaction 17beta-estradiol 17-sulfate(out) + 2 Na(+)(out) = 17beta-estradiol 17-sulfate(in) + 2 Na(+)(in). It catalyses the reaction 17alpha-hydroxypregnenolone 3-sulfate(out) + 2 Na(+)(out) = 17alpha-hydroxypregnenolone 3-sulfate(in) + 2 Na(+)(in). The enzyme catalyses epiandrosterone 3-sulfate(out) + 2 Na(+)(out) = epiandrosterone 3-sulfate(in) + 2 Na(+)(in). The catalysed reaction is epitestosterone 17-sulfate(out) + 2 Na(+)(out) = epitestosterone 17-sulfate(in) + 2 Na(+)(in). It carries out the reaction testosterone 17-sulfate(out) + 2 Na(+)(out) = testosterone 17-sulfate(in) + 2 Na(+)(in). It catalyses the reaction 16alpha-hydroxydehydroepiandrosterone 3-sulfate(out) + 2 Na(+)(out) = 16alpha-hydroxydehydroepiandrosterone 3-sulfate(in) + 2 Na(+)(in). In terms of biological role, transports sulfoconjugated steroid hormones from the extracellular compartment into the cytosol in a sodium-dependent manner without hydrolysis. Steroid sulfate hormones are commonly considered to be biologically inactive metabolites, that may be activated by steroid sulfatases into free steroids. May play an important role by delivering sulfoconjugated steroids to specific target cells in reproductive organs. May play a role transporting the estriol precursor 16alpha-hydroxydehydroepiandrosterone 3-sulfate (16a-OH-DHEAS) at the fetal blood vessel endothelium. Can also transport other sulfoconjugated molecules such as taurolithocholic acid-3-sulfate and sulfoconjugated pyrenes. The polypeptide is Sodium-dependent organic anion transporter (Slc10a6) (Mus musculus (Mouse)).